The following is a 266-amino-acid chain: MGQKIHPTGFRLAVSRNWASRWYANNNNFAAMLQEDIGVREYLKKKLKNASVGRVVIERPAKNARITIFSSRPGVVIGKKGEDIELLKTELQRRMGVPVHVNIEEIRKPETDAQLIADSITQQLERRIMFRRAMKRAMQNAMRLGAQGIKIMSAGRLNGIEIARTEWYREGRVPLHTLRADIDYATSEAKTTYGIIGVKVWVYKGDTLGRNDAPVVEEVAEDKRPRRNARPGDRRPRRDGEGGAPGARRGAPRRGAGKPEDGKTGE.

A KH type-2 domain is found at 39–107; it reads VREYLKKKLK…PVHVNIEEIR (69 aa). Residues 218–266 form a disordered region; sequence EVAEDKRPRRNARPGDRRPRRDGEGGAPGARRGAPRRGAGKPEDGKTGE. Composition is skewed to basic and acidic residues over residues 230-241 and 257-266; these read RPGDRRPRRDGE and GKPEDGKTGE.

It belongs to the universal ribosomal protein uS3 family. Part of the 30S ribosomal subunit. Forms a tight complex with proteins S10 and S14.

Binds the lower part of the 30S subunit head. Binds mRNA in the 70S ribosome, positioning it for translation. The chain is Small ribosomal subunit protein uS3 from Burkholderia multivorans (strain ATCC 17616 / 249).